The sequence spans 294 residues: 4-hydroxy-tetrahydrodipicolinate synthase (294 aa).

Pyruvate is bound at residue Thr-47. Tyr-136 (proton donor/acceptor) is an active-site residue. Catalysis depends on Lys-164, which acts as the Schiff-base intermediate with substrate. Val-206 is a binding site for pyruvate.

The protein belongs to the DapA family. Homotetramer; dimer of dimers.

The protein resides in the cytoplasm. The enzyme catalyses L-aspartate 4-semialdehyde + pyruvate = (2S,4S)-4-hydroxy-2,3,4,5-tetrahydrodipicolinate + H2O + H(+). It participates in amino-acid biosynthesis; L-lysine biosynthesis via DAP pathway; (S)-tetrahydrodipicolinate from L-aspartate: step 3/4. Functionally, catalyzes the condensation of (S)-aspartate-beta-semialdehyde [(S)-ASA] and pyruvate to 4-hydroxy-tetrahydrodipicolinate (HTPA). This is 4-hydroxy-tetrahydrodipicolinate synthase from Acaryochloris marina (strain MBIC 11017).